A 396-amino-acid chain; its full sequence is Probable sugar efflux transporter (396 aa).

A run of 12 helical transmembrane segments spans residues 15–35 (VVTL…PVGL), 50–70 (VGIM…PFML), 81–101 (LICL…SWSF), 103–123 (VLVI…SITA), 136–156 (AQAL…GLPL), 170–190 (FFAI…LLPL), 209–229 (PALM…YTAY), 246–266 (FATA…VIFG), 275–295 (ALVS…LPAA), 299–319 (IHLG…GLGM), 333–353 (VAMA…ALVG), and 364–384 (MIGY…IIIF).

Belongs to the major facilitator superfamily. SotB (TC 2.A.1.2) family.

The protein localises to the cell inner membrane. Its function is as follows. Involved in the efflux of sugars. The physiological role may be the reduction of the intracellular concentration of toxic sugars or sugar metabolites. The protein is Probable sugar efflux transporter of Shigella flexneri serotype 5b (strain 8401).